Here is a 134-residue protein sequence, read N- to C-terminus: Profilin-4 (134 aa).

An intrachain disulfide couples cysteine 13 to cysteine 118. An Involved in PIP2 interaction motif is present at residues 84–100 (AVIRGKKGSGGITIKKT). Threonine 114 bears the Phosphothreonine mark.

It belongs to the profilin family. In terms of assembly, occurs in many kinds of cells as a complex with monomeric actin in a 1:1 ratio. Phosphorylated by MAP kinases.

The protein localises to the cytoplasm. The protein resides in the cytoskeleton. Binds to actin and affects the structure of the cytoskeleton. At high concentrations, profilin prevents the polymerization of actin, whereas it enhances it at low concentrations. The sequence is that of Profilin-4 from Olea europaea (Common olive).